Here is a 168-residue protein sequence, read N- to C-terminus: Photosystem I assembly protein Ycf3 (168 aa).

3 TPR repeats span residues 35 to 68 (AFAYYRDGMSAQSEGNYAEALQNYYEAMRLEIDP), 72 to 105 (SYILYNIGLIHTRNGEHTKALEYYFRALERNPFL), and 120 to 153 (GEQAIRQGDSEIAEAWFDQAAEYWKQALALTPGN).

Belongs to the Ycf3 family.

Its subcellular location is the plastid. It is found in the chloroplast thylakoid membrane. In terms of biological role, essential for the assembly of the photosystem I (PSI) complex. May act as a chaperone-like factor to guide the assembly of the PSI subunits. The polypeptide is Photosystem I assembly protein Ycf3 (Morus indica (Mulberry)).